The sequence spans 472 residues: 3-isopropylmalate dehydratase large subunit (472 aa).

Residues Cys349, Cys409, and Cys412 each contribute to the [4Fe-4S] cluster site.

The protein belongs to the aconitase/IPM isomerase family. LeuC type 1 subfamily. Heterodimer of LeuC and LeuD. [4Fe-4S] cluster is required as a cofactor.

The enzyme catalyses (2R,3S)-3-isopropylmalate = (2S)-2-isopropylmalate. It participates in amino-acid biosynthesis; L-leucine biosynthesis; L-leucine from 3-methyl-2-oxobutanoate: step 2/4. Its function is as follows. Catalyzes the isomerization between 2-isopropylmalate and 3-isopropylmalate, via the formation of 2-isopropylmaleate. The protein is 3-isopropylmalate dehydratase large subunit of Rhodospirillum rubrum (strain ATCC 11170 / ATH 1.1.1 / DSM 467 / LMG 4362 / NCIMB 8255 / S1).